The following is a 331-amino-acid chain: Glyceraldehyde-3-phosphate dehydrogenase 2 (331 aa).

Residues 11-12, aspartate 33, and arginine 78 contribute to the NAD(+) site; that span reads RI. D-glyceraldehyde 3-phosphate-binding positions include 148 to 150, threonine 179, 208 to 209, and arginine 231; these read SCT and TG. The active-site Nucleophile is the cysteine 149. Residue asparagine 313 coordinates NAD(+).

Belongs to the glyceraldehyde-3-phosphate dehydrogenase family. Homotetramer.

The protein localises to the cytoplasm. It carries out the reaction D-glyceraldehyde 3-phosphate + phosphate + NAD(+) = (2R)-3-phospho-glyceroyl phosphate + NADH + H(+). The protein operates within carbohydrate degradation; glycolysis; pyruvate from D-glyceraldehyde 3-phosphate: step 1/5. In Kluyveromyces marxianus (Yeast), this protein is Glyceraldehyde-3-phosphate dehydrogenase 2 (GAP2).